The chain runs to 430 residues: Enolase (430 aa).

Gln167 lines the (2R)-2-phosphoglycerate pocket. Glu209 functions as the Proton donor in the catalytic mechanism. Residues Asp246, Glu287, and Asp314 each contribute to the Mg(2+) site. (2R)-2-phosphoglycerate contacts are provided by Lys339, Arg368, Ser369, and Lys390. Catalysis depends on Lys339, which acts as the Proton acceptor.

Belongs to the enolase family. The cofactor is Mg(2+).

It is found in the cytoplasm. The protein resides in the secreted. Its subcellular location is the cell surface. It carries out the reaction (2R)-2-phosphoglycerate = phosphoenolpyruvate + H2O. It functions in the pathway carbohydrate degradation; glycolysis; pyruvate from D-glyceraldehyde 3-phosphate: step 4/5. In terms of biological role, catalyzes the reversible conversion of 2-phosphoglycerate (2-PG) into phosphoenolpyruvate (PEP). It is essential for the degradation of carbohydrates via glycolysis. This Prochlorococcus marinus subsp. pastoris (strain CCMP1986 / NIES-2087 / MED4) protein is Enolase.